Consider the following 414-residue polypeptide: NADH-quinone oxidoreductase subunit D (414 aa).

It belongs to the complex I 49 kDa subunit family. As to quaternary structure, NDH-1 is composed of 14 different subunits. Subunits NuoB, C, D, E, F, and G constitute the peripheral sector of the complex.

Its subcellular location is the cell inner membrane. It catalyses the reaction a quinone + NADH + 5 H(+)(in) = a quinol + NAD(+) + 4 H(+)(out). In terms of biological role, NDH-1 shuttles electrons from NADH, via FMN and iron-sulfur (Fe-S) centers, to quinones in the respiratory chain. The immediate electron acceptor for the enzyme in this species is believed to be ubiquinone. Couples the redox reaction to proton translocation (for every two electrons transferred, four hydrogen ions are translocated across the cytoplasmic membrane), and thus conserves the redox energy in a proton gradient. The polypeptide is NADH-quinone oxidoreductase subunit D (Akkermansia muciniphila (strain ATCC BAA-835 / DSM 22959 / JCM 33894 / BCRC 81048 / CCUG 64013 / CIP 107961 / Muc)).